We begin with the raw amino-acid sequence, 289 residues long: uncharacterized protein (289 aa).

An N-terminal signal peptide occupies residues 1–23 (MIKNYKLLLFTTFTLFFITFVSG). Asparagine 74, asparagine 101, asparagine 132, and asparagine 285 each carry an N-linked (GlcNAc...) asparagine glycan.

It localises to the secreted. This is an uncharacterized protein from Dictyostelium discoideum (Social amoeba).